The sequence spans 158 residues: Ribonuclease H (158 aa).

Residues 2 to 143 form the RNase H type-1 domain; the sequence is PEKIIELFTD…VDALLNRVMD (142 aa). Residues Asp11, Glu49, Asp71, and Asp135 each coordinate Mg(2+).

It belongs to the RNase H family. In terms of assembly, monomer. Requires Mg(2+) as cofactor.

Its subcellular location is the cytoplasm. It carries out the reaction Endonucleolytic cleavage to 5'-phosphomonoester.. Functionally, endonuclease that specifically degrades the RNA of RNA-DNA hybrids. In Acidithiobacillus ferrooxidans (strain ATCC 23270 / DSM 14882 / CIP 104768 / NCIMB 8455) (Ferrobacillus ferrooxidans (strain ATCC 23270)), this protein is Ribonuclease H.